The sequence spans 190 residues: Somatotropin (190 aa).

His-19 serves as a coordination point for Zn(2+). An intrachain disulfide couples Cys-52 to Cys-163. Glu-172 serves as a coordination point for Zn(2+). A disulfide bridge links Cys-180 with Cys-188.

The protein belongs to the somatotropin/prolactin family.

It localises to the secreted. Growth hormone plays an important role in growth control and involved in the regulation of several anabolic processes. This Crocodylus novaeguineae (Crocodile) protein is Somatotropin (GH).